The following is a 608-amino-acid chain: DNA ligase (608 aa).

Glu-266 is an ATP binding site. Catalysis depends on Lys-268, which acts as the N6-AMP-lysine intermediate. The ATP site is built by Arg-273, Arg-288, Glu-318, Phe-358, Arg-435, and Lys-441.

This sequence belongs to the ATP-dependent DNA ligase family. Mg(2+) is required as a cofactor. Mn(2+) serves as cofactor.

The enzyme catalyses ATP + (deoxyribonucleotide)n-3'-hydroxyl + 5'-phospho-(deoxyribonucleotide)m = (deoxyribonucleotide)n+m + AMP + diphosphate.. The catalysed reaction is ADP + (deoxyribonucleotide)n-3'-hydroxyl + 5'-phospho-(deoxyribonucleotide)m = (deoxyribonucleotide)n+m + AMP + phosphate.. It catalyses the reaction GTP + (deoxyribonucleotide)n-3'-hydroxyl + 5'-phospho-(deoxyribonucleotide)m = (deoxyribonucleotide)n+m + GMP + diphosphate.. Functionally, DNA ligase that seals nicks in double-stranded DNA during DNA replication, DNA recombination and DNA repair. Can use ATP, ADP and GTP, but not CTP, TTP or NAD(+). The sequence is that of DNA ligase from Hyperthermus butylicus (strain DSM 5456 / JCM 9403 / PLM1-5).